The sequence spans 293 residues: Small ribosomal subunit biogenesis GTPase RsgA (293 aa).

The 161-residue stretch at 63-223 (KNELVRPPIA…VADTPGFSSL (161 aa)) folds into the CP-type G domain. Residues 112 to 115 (SKMD) and 166 to 174 (GQSGVGKSS) contribute to the GTP site. C247, C252, H254, and C260 together coordinate Zn(2+).

Belongs to the TRAFAC class YlqF/YawG GTPase family. RsgA subfamily. Monomer. Associates with 30S ribosomal subunit, binds 16S rRNA. The cofactor is Zn(2+).

The protein resides in the cytoplasm. Its function is as follows. One of several proteins that assist in the late maturation steps of the functional core of the 30S ribosomal subunit. Helps release RbfA from mature subunits. May play a role in the assembly of ribosomal proteins into the subunit. Circularly permuted GTPase that catalyzes slow GTP hydrolysis, GTPase activity is stimulated by the 30S ribosomal subunit. The protein is Small ribosomal subunit biogenesis GTPase RsgA of Bacillus cereus (strain ATCC 14579 / DSM 31 / CCUG 7414 / JCM 2152 / NBRC 15305 / NCIMB 9373 / NCTC 2599 / NRRL B-3711).